We begin with the raw amino-acid sequence, 101 residues long: Small ribosomal subunit protein uS14 (101 aa).

Positions 1–11 are enriched in basic and acidic residues; the sequence is MAKKSSVEKNN. Residues 1–22 form a disordered region; the sequence is MAKKSSVEKNNRRQRMVKNAAA. Basic residues predominate over residues 12–22; the sequence is RRQRMVKNAAA.

Belongs to the universal ribosomal protein uS14 family. As to quaternary structure, part of the 30S ribosomal subunit. Contacts proteins S3 and S10.

In terms of biological role, binds 16S rRNA, required for the assembly of 30S particles and may also be responsible for determining the conformation of the 16S rRNA at the A site. This Afipia carboxidovorans (strain ATCC 49405 / DSM 1227 / KCTC 32145 / OM5) (Oligotropha carboxidovorans) protein is Small ribosomal subunit protein uS14.